The following is a 138-amino-acid chain: Class I hydrophobin 1 (138 aa).

A signal peptide spans 1 to 19; it reads MRFSAATVSALAMALTVAA. Cystine bridges form between Cys45–Cys113, Cys53–Cys107, Cys54–Cys91, and Cys114–Cys131.

It belongs to the fungal hydrophobin family. Interacts with the lipid droplet coating protein Cap20.

It localises to the secreted. It is found in the lipid droplet. Aerial growth, conidiation, and dispersal of filamentous fungi in the environment rely upon a capability of their secreting small amphipathic proteins called hydrophobins (HPBs) with low sequence identity. Class I can self-assemble into an outermost layer of rodlet bundles on aerial cell surfaces, conferring cellular hydrophobicity that supports fungal growth, development and dispersal; whereas Class II form highly ordered films at water-air interfaces through intermolecular interactions but contribute nothing to the rodlet structure. Hydr1 is a class I hydrophobin involved in spore germination, appressorium formation, but not in the formation of the rodlet layer of conidia. Responsible for the full virulence on rubber tree leaves. This Colletotrichum siamense (Anthracnose fungus) protein is Class I hydrophobin 1.